The chain runs to 158 residues: Transcription elongation factor GreB (158 aa).

The protein belongs to the GreA/GreB family. GreB subfamily.

In terms of biological role, necessary for efficient RNA polymerase transcription elongation past template-encoded arresting sites. The arresting sites in DNA have the property of trapping a certain fraction of elongating RNA polymerases that pass through, resulting in locked ternary complexes. Cleavage of the nascent transcript by cleavage factors such as GreA or GreB allows the resumption of elongation from the new 3'terminus. GreB releases sequences of up to 9 nucleotides in length. The sequence is that of Transcription elongation factor GreB from Escherichia coli (strain K12).